Consider the following 517-residue polypeptide: Cytochrome P450 monooxygenase ausI (517 aa).

The helical transmembrane segment at 8–28 threads the bilayer; that stretch reads LAPLGQPWIAGLVVVSAVLYL. Cysteine 457 contributes to the heme binding site.

Belongs to the cytochrome P450 family. Heme is required as a cofactor.

The protein localises to the membrane. It participates in secondary metabolite biosynthesis; terpenoid biosynthesis. Functionally, cytochrome P450 monooxygenase; part of the gene cluster that mediates the biosynthesis of calidodehydroaustin, a fungal meroterpenoid. The first step of the pathway is the synthesis of 3,5-dimethylorsellinic acid by the polyketide synthase ausA. 3,5-dimethylorsellinic acid is then prenylated by the polyprenyl transferase ausN. Further epoxidation by the FAD-dependent monooxygenase ausM and cyclization by the probable terpene cyclase ausL lead to the formation of protoaustinoid A. Protoaustinoid A is then oxidized to spiro-lactone preaustinoid A3 by the combined action of the FAD-binding monooxygenases ausB and ausC, and the dioxygenase ausE. Acid-catalyzed keto-rearrangement and ring contraction of the tetraketide portion of preaustinoid A3 by ausJ lead to the formation of preaustinoid A4. The aldo-keto reductase ausK, with the help of ausH, is involved in the next step by transforming preaustinoid A4 into isoaustinone which is in turn hydroxylated by the P450 monooxygenase ausI to form austinolide. The cytochrome P450 monooxygenase ausG modifies austinolide to austinol. Austinol is further acetylated to austin by the O-acetyltransferase ausP, which spontaneously changes to dehydroaustin. The cytochrome P450 monooxygenase ausR then converts dehydroaustin is into 7-dehydrodehydroaustin. The hydroxylation catalyzed by ausR permits the O-acetyltransferase ausQ to add an additional acetyl group to the molecule, leading to the formation of acetoxydehydroaustin. The short chain dehydrogenase ausT catalyzes the reduction of the double bond present between carbon atoms 1 and 2 to convert 7-dehydrodehydroaustin into 1,2-dihydro-7-hydroxydehydroaustin. AusQ catalyzes not only an acetylation reaction but also the addition of the PKS ausV diketide product to 1,2-dihydro-7-hydroxydehydroaustin, forming precalidodehydroaustin. Finally, the iron/alpha-ketoglutarate-dependent dioxygenase converts precalidodehydroaustin into calidodehydroaustin. This is Cytochrome P450 monooxygenase ausI from Aspergillus calidoustus.